A 193-amino-acid polypeptide reads, in one-letter code: ATP-dependent protease subunit HslV (193 aa).

The active site involves T12. The Na(+) site is built by A167, C170, and T173.

Belongs to the peptidase T1B family. HslV subfamily. In terms of assembly, a double ring-shaped homohexamer of HslV is capped on each side by a ring-shaped HslU homohexamer. The assembly of the HslU/HslV complex is dependent on binding of ATP.

The protein localises to the cytoplasm. The enzyme catalyses ATP-dependent cleavage of peptide bonds with broad specificity.. Allosterically activated by HslU binding. Functionally, protease subunit of a proteasome-like degradation complex believed to be a general protein degrading machinery. The sequence is that of ATP-dependent protease subunit HslV from Bartonella quintana (strain Toulouse) (Rochalimaea quintana).